The sequence spans 214 residues: Small ribosomal subunit protein uS5 (214 aa).

An S5 DRBM domain is found at 54–117; that stretch reads MKYEVIDIGM…RDAKMHVIPV (64 aa).

It belongs to the universal ribosomal protein uS5 family. As to quaternary structure, part of the 30S ribosomal subunit. Contacts protein S4.

Functionally, with S4 and S12 plays an important role in translational accuracy. The sequence is that of Small ribosomal subunit protein uS5 from Metallosphaera sedula (strain ATCC 51363 / DSM 5348 / JCM 9185 / NBRC 15509 / TH2).